Reading from the N-terminus, the 331-residue chain is Phosphate acyltransferase (331 aa).

It belongs to the PlsX family. As to quaternary structure, homodimer. Probably interacts with PlsY.

The protein resides in the cytoplasm. The enzyme catalyses a fatty acyl-[ACP] + phosphate = an acyl phosphate + holo-[ACP]. It functions in the pathway lipid metabolism; phospholipid metabolism. In terms of biological role, catalyzes the reversible formation of acyl-phosphate (acyl-PO(4)) from acyl-[acyl-carrier-protein] (acyl-ACP). This enzyme utilizes acyl-ACP as fatty acyl donor, but not acyl-CoA. The chain is Phosphate acyltransferase from Clostridium acetobutylicum (strain ATCC 824 / DSM 792 / JCM 1419 / IAM 19013 / LMG 5710 / NBRC 13948 / NRRL B-527 / VKM B-1787 / 2291 / W).